Consider the following 2104-residue polypeptide: Myosin type-2 heavy chain 2 (2104 aa).

Residues 35–85 form the Myosin N-terminal SH3-like domain; sequence DERTWIWIPDSKESFVKAWIVEDLGEKYRVKLERDGSERIVDGFDAEKVNP. One can recognise a Myosin motor domain in the interval 89–767; that stretch reads DMVDDMAALT…VLGSLEDRRN (679 aa). 182 to 189 provides a ligand contact to ATP; the sequence is GESGAGKT. An actin-binding region spans residues 646–660; the sequence is LSSLMHQLEATQPHF. A coiled-coil region spans residues 829–2104; that stretch reads LGTTQTDEYL…RSNRSPSVLR (1276 aa). Disordered regions lie at residues 1245-1278 and 1398-1426; these read NRSV…DGNN and MEFT…SKRS. Over residues 1246 to 1259 the composition is skewed to polar residues; sequence RSVTQHTLDGNSPH. The segment covering 1261-1278 has biased composition (basic and acidic residues); it reads SFEEKHSGDPLKRIDGNN. The segment covering 1409–1424 has biased composition (polar residues); it reads SKISNLPSSQPGSPSK. Ser1421 is subject to Phosphoserine.

Belongs to the TRAFAC class myosin-kinesin ATPase superfamily. Myosin family. In terms of assembly, binds to cdc4 and rlc1.

Stabilizes the F-actin cables forming the F-actin ring that surrounds the nucleus during interphase. May work in conjunction with myo2. The chain is Myosin type-2 heavy chain 2 (myo3) from Schizosaccharomyces pombe (strain 972 / ATCC 24843) (Fission yeast).